The following is a 383-amino-acid chain: Transposase InsI for insertion sequence element IS30A (383 aa).

Residues valine 213–valine 379 enclose the Integrase catalytic domain.

Belongs to the transposase IS30 family.

Functionally, required for the transposition of the insertion element. This is Transposase InsI for insertion sequence element IS30A (insI1) from Escherichia coli (strain K12).